An 833-amino-acid chain; its full sequence is Piwi-like protein 2 (833 aa).

In terms of domain architecture, PAZ spans 227-353; it reads RINRVLNDNS…IPGELCFLCG (127 aa). The interval 313 to 338 is disordered; that stretch reads PMRRERKKKDEEGVEKEKEKEAPEEK. Residues 320–338 are compositionally biased toward basic and acidic residues; the sequence is KKDEEGVEKEKEKEAPEEK. The Piwi domain occupies 515–815; the sequence is KMALVFVPDD…LAELVGKVHK (301 aa).

Belongs to the argonaute family. Piwi subfamily. In terms of tissue distribution, expressed in dividing adult stem cells.

Its function is as follows. Required for the production of functional progeny from adult somatic stem cells (neoblasts). This is Piwi-like protein 2 (wi-2) from Schmidtea mediterranea (Freshwater planarian flatworm).